The chain runs to 493 residues: Voltage-gated potassium channel regulatory subunit KCNF1 (493 aa).

At 1–183 the chain is on the cytoplasmic side; sequence MDASAEQSLP…KPESSCPARV (183 aa). The chain crosses the membrane as a helical span at residues 184–204; sequence VAVLSFLLILVSSVVMCMGTI. Residues 205–223 lie on the Extracellular side of the membrane; the sequence is PELQVVDSEGNRVEHPTLE. The chain crosses the membrane as a helical span at residues 224–244; sequence NVETACIGWFTLEYLLRLFSS. The Cytoplasmic segment spans residues 245–249; the sequence is PNKLH. A helical membrane pass occupies residues 250–270; sequence FALSFMNIVDVLAILPFYVSL. At 271-289 the chain is on the extracellular side; sequence TLTHLGARMMELTNVQQAV. A helical; Voltage-sensor transmembrane segment spans residues 290–310; sequence QALRIMRIARIFKLARHSSGL. Topologically, residues 311–324 are cytoplasmic; the sequence is QTLTYALKRSFKEL. Residues 325–345 traverse the membrane as a helical segment; the sequence is GLLLMYLAVGIFVFSALGYTM. At 346–357 the chain is on the extracellular side; sequence EQSHPETLFKSI. An intramembrane region (pore-forming) is located at residues 358–378; that stretch reads PQSFWWAIITMTTVGYGDIYP. The Selectivity filter signature appears at 370-375; the sequence is TVGYGD. Over 379 to 385 the chain is Extracellular; that stretch reads KTTLGKL. A helical transmembrane segment spans residues 386-406; sequence NAAISFLCGVIAIALPIHPII. Topologically, residues 407-493 are cytoplasmic; it reads NNFVRYYNKQ…HHRTRLQSCK (87 aa). A disordered region spans residues 433–468; that stretch reads NSSSAESKPGGSRSDLDTLPPEPAAREGPSWGSRLK.

It belongs to the potassium channel family. F (TC 1.A.1.2) subfamily. Kv5.1/KCNF1 sub-subfamily. As to quaternary structure, heterotetramer with KCNB1 or KCNB2. Expressed in brain namely in the piriform cortex, olfactory tubercle, and medial habenular nucleus. Also expressed in the medial amygdaloid nuclei and the lateral amygdaloid area.

Its subcellular location is the cell membrane. Regulatory alpha-subunit of the voltage-gated potassium (Kv) channel which, when coassembled with KCNB1 or KCNB2, can modulate their expression and their gating kinetics by acting on deactivation upon repolarization and inactivation during maintained depolarization. Accelerates inactivation but has relatively little effect on deactivation. Coexpression with KCNB1 or KCNB2 markedly slows inactivation. Each modulatory subunit has its own specific properties of regulation, and can lead to extensive inhibitions, to large changes in kinetics, and/or to large shifts in the voltage dependencies of the inactivation process. The gating kinetics depends on the nature and stoichiometry of the associated regulatory sunbunit. Fails to produce a potassium current when expressed alone. This Rattus norvegicus (Rat) protein is Voltage-gated potassium channel regulatory subunit KCNF1.